Consider the following 232-residue polypeptide: uncharacterized protein (232 aa).

The stretch at 89 to 140 (EFGTWQRRKNSLEDSLREVMKRRGELQDQLTAELGAIERMQTDLVGARQTLD) forms a coiled coil.

This is an uncharacterized protein from Mycobacterium leprae (strain TN).